Reading from the N-terminus, the 360-residue chain is Phospho-N-acetylmuramoyl-pentapeptide-transferase (360 aa).

A run of 10 helical transmembrane segments spans residues 21 to 41 (YLSF…LWMG), 73 to 93 (TMGG…WANL), 94 to 114 (SNPY…VGFV), 132 to 152 (WKYF…YAYG), 168 to 188 (VMPQ…VGTS), 199 to 219 (GLAI…AWAT), 236 to 256 (ASEL…FLWF), 263 to 283 (VFMG…IAVL), 288 to 308 (LVLV…ILQV), and 338 to 358 (VIVR…ATLK).

It belongs to the glycosyltransferase 4 family. MraY subfamily. It depends on Mg(2+) as a cofactor.

The protein localises to the cell inner membrane. The catalysed reaction is UDP-N-acetyl-alpha-D-muramoyl-L-alanyl-gamma-D-glutamyl-meso-2,6-diaminopimeloyl-D-alanyl-D-alanine + di-trans,octa-cis-undecaprenyl phosphate = di-trans,octa-cis-undecaprenyl diphospho-N-acetyl-alpha-D-muramoyl-L-alanyl-D-glutamyl-meso-2,6-diaminopimeloyl-D-alanyl-D-alanine + UMP. The protein operates within cell wall biogenesis; peptidoglycan biosynthesis. Catalyzes the initial step of the lipid cycle reactions in the biosynthesis of the cell wall peptidoglycan: transfers peptidoglycan precursor phospho-MurNAc-pentapeptide from UDP-MurNAc-pentapeptide onto the lipid carrier undecaprenyl phosphate, yielding undecaprenyl-pyrophosphoryl-MurNAc-pentapeptide, known as lipid I. The protein is Phospho-N-acetylmuramoyl-pentapeptide-transferase of Vibrio vulnificus (strain YJ016).